The following is a 1791-amino-acid chain: Brefeldin A-inhibited guanine nucleotide-exchange protein 2 (1791 aa).

Position 1 is an N-acetylmethionine (methionine 1). The DCB; DCB:DCB domain and DCB:HUS domain interaction stretch occupies residues 2 to 224; the sequence is QESQTKSMFV…KPQSPVIQAT (223 aa). Disordered stretches follow at residues 208-292 and 311-350; these read LEKP…DNGA and AAEK…IADD. 3 positions are modified to phosphoserine: serine 214, serine 218, and serine 227. Polar residues predominate over residues 214–225; sequence SKPQSPVIQATA. The segment covering 233–243 has biased composition (polar residues); that stretch reads LKQSQAQSKPT. Phosphothreonine is present on threonine 244. Residues 244-257 show a composition bias toward basic and acidic residues; sequence TPEKTELPNGDHAR. Position 277 is a phosphoserine (serine 277). Serine 355 and serine 356 each carry phosphoserine. The HUS; DCB:HUS domain interaction stretch occupies residues 515-535; it reads ADAQCVVDIYVNYDCDLNAAN. At serine 621 the chain carries Phosphoserine. Threonine 623 carries the post-translational modification Phosphothreonine. Serine 624 carries the phosphoserine modification. Threonine 633 is subject to Phosphothreonine. Positions 661–792 constitute an SEC7 domain; the sequence is FNKKPKRGIQ…IIMLTTDLHS (132 aa). 8 positions are modified to phosphoserine: serine 707, serine 1518, serine 1520, serine 1521, serine 1532, serine 1535, serine 1541, and serine 1788.

Homodimer. Interacts with ARFGEF1/BIG1; both proteins are probably part of the same or very similar macromolecular complexes. Interacts with PRKAR1A, PRKAR2A, PRKAR1B, PRKAR2B, PPP1CC, PDE3A, TNFRSF1A, MYCBP and EXOC7. Interacts with GABRB1, GABRB2 and GABRB3. Post-translationally, in vitro phosphorylated by PKA reducing its GEF activity and dephosphorylated by phosphatase PP1. In terms of tissue distribution, expressed in brain (at protein level).

The protein localises to the cytoplasm. It is found in the membrane. The protein resides in the golgi apparatus. Its subcellular location is the perinuclear region. It localises to the trans-Golgi network. The protein localises to the endosome. It is found in the cytoskeleton. The protein resides in the microtubule organizing center. Its subcellular location is the centrosome. It localises to the cell projection. The protein localises to the dendrite. It is found in the cytoplasmic vesicle. The protein resides in the synapse. Inhibited by brefeldin A. Functionally, promotes guanine-nucleotide exchange on ARF1 and ARF3 and to a lower extent on ARF5 and ARF6. Promotes the activation of ARF1/ARF5/ARF6 through replacement of GDP with GTP. Involved in the regulation of Golgi vesicular transport. Required for the integrity of the endosomal compartment. Involved in trafficking from the trans-Golgi network (TGN) to endosomes and is required for membrane association of the AP-1 complex and GGA1. Seems to be involved in recycling of the transferrin receptor from recycling endosomes to the plasma membrane. Probably is involved in the exit of GABA(A) receptors from the endoplasmic reticulum. Involved in constitutive release of tumor necrosis factor receptor 1 via exosome-like vesicles; the function seems to involve PKA and specifically PRKAR2B. Proposed to act as A kinase-anchoring protein (AKAP) and may mediate crosstalk between Arf and PKA pathways. The polypeptide is Brefeldin A-inhibited guanine nucleotide-exchange protein 2 (Arfgef2) (Rattus norvegicus (Rat)).